A 290-amino-acid chain; its full sequence is MLRKHPIISITGSSGAGTTSVKRTFEQIFRRENVVAAYIEGDAFHRYNRAEMRTRMAEESDKGNKHFSHFSPETNLFAELEGVFRSYGETGTGNTRYYVHDDAESALHGVPPGTFTDWQPLPDASDLLFYEGLHGAVVTDKVNVAQYADLKIGVVPVINLEWIQKLHRDRNARGYSTEAVTDTILRRMPDYVNYICPQFAETDINFQRVPTVDTSNPFISRWIPTPDESMVVIRLKNPRGIDFPYLLSMIPSSFMSRANSIVIHGSKLDLAMQLILTPLILQLIERKKRA.

12–20 (GSSGAGTTS) is a binding site for ATP.

The protein belongs to the phosphoribulokinase family.

It catalyses the reaction D-ribulose 5-phosphate + ATP = D-ribulose 1,5-bisphosphate + ADP + H(+). It functions in the pathway carbohydrate biosynthesis; Calvin cycle. The chain is Phosphoribulokinase (cbbP) from Nitrobacter vulgaris.